A 193-amino-acid chain; its full sequence is Peptidyl-tRNA hydrolase (193 aa).

Tyrosine 17 is a binding site for tRNA. The Proton acceptor role is filled by histidine 22. Positions 69, 71, and 117 each coordinate tRNA.

Belongs to the PTH family. As to quaternary structure, monomer.

The protein localises to the cytoplasm. It carries out the reaction an N-acyl-L-alpha-aminoacyl-tRNA + H2O = an N-acyl-L-amino acid + a tRNA + H(+). Its function is as follows. Hydrolyzes ribosome-free peptidyl-tRNAs (with 1 or more amino acids incorporated), which drop off the ribosome during protein synthesis, or as a result of ribosome stalling. Functionally, catalyzes the release of premature peptidyl moieties from peptidyl-tRNA molecules trapped in stalled 50S ribosomal subunits, and thus maintains levels of free tRNAs and 50S ribosomes. This Leifsonia xyli subsp. xyli (strain CTCB07) protein is Peptidyl-tRNA hydrolase.